Here is a 730-residue protein sequence, read N- to C-terminus: Wall-associated receptor kinase-like 3 (730 aa).

Residues Met1–Ala25 form the signal peptide. At Ala26–Val357 the chain is on the extracellular side. Residues Asn32, Asn38, Asn68, Asn90, Asn119, Asn132, Asn212, Asn233, and Asn269 are each glycosylated (N-linked (GlcNAc...) asparagine). Residues Cys283–Cys340 are atypical EGF-like. Cystine bridges form between Cys285–Cys298, Cys320–Cys331, and Cys326–Cys340. A helical transmembrane segment spans residues Leu358–Ile378. The Cytoplasmic portion of the chain corresponds to Arg379–Ser730. The Protein kinase domain maps to Phe428 to Ile699. Residues Leu434 to Val442 and Lys456 each bind ATP. Asp553 acts as the Proton acceptor in catalysis. Positions Pro703–Ser730 are disordered. Acidic residues predominate over residues Asn712 to Leu721.

This sequence belongs to the protein kinase superfamily. Ser/Thr protein kinase family. As to expression, preferentially expressed in roots and flowers.

It localises to the membrane. The enzyme catalyses L-seryl-[protein] + ATP = O-phospho-L-seryl-[protein] + ADP + H(+). It catalyses the reaction L-threonyl-[protein] + ATP = O-phospho-L-threonyl-[protein] + ADP + H(+). Functionally, serine/threonine-protein kinase that may function as a signaling receptor of extracellular matrix component. In Arabidopsis thaliana (Mouse-ear cress), this protein is Wall-associated receptor kinase-like 3 (WAKL3).